We begin with the raw amino-acid sequence, 345 residues long: Trans-3-hydroxy-L-proline dehydratase (345 aa).

The Proton acceptor role is filled by Ser-90. Substrate-binding positions include 91-92 (GS), Asp-252, and 257-258 (GT).

It belongs to the proline racemase family.

The enzyme catalyses trans-3-hydroxy-L-proline = 1-pyrroline-2-carboxylate + H2O. In terms of biological role, catalyzes the dehydration of trans-3-hydroxy-L-proline (t3LHyp) to Delta(1)-pyrroline-2-carboxylate (Pyr2C). May be involved in a degradation pathway that converts t3LHyp to L-proline, which would allow S.novella to grow on t3LHyp as a sole carbon source. This chain is Trans-3-hydroxy-L-proline dehydratase, found in Ancylobacter novellus (strain ATCC 8093 / DSM 506 / JCM 20403 / CCM 1077 / IAM 12100 / NBRC 12443 / NCIMB 10456) (Starkeya novella).